Consider the following 201-residue polypeptide: Probable cobalt-precorrin-6B C(15)-methyltransferase (decarboxylating) (201 aa).

S-adenosyl-L-methionine-binding positions include Thr-28, 52–56 (GTGTG), Asp-76, and Ala-105.

The protein belongs to the methyltransferase superfamily. Archaeal-type CbiT family.

The enzyme catalyses Co-precorrin-6B + S-adenosyl-L-methionine = Co-precorrin-7 + S-adenosyl-L-homocysteine + CO2. It participates in cofactor biosynthesis; adenosylcobalamin biosynthesis; cob(II)yrinate a,c-diamide from sirohydrochlorin (anaerobic route): step 8/10. Functionally, catalyzes the methylation of C-15 in cobalt-precorrin-6B followed by the decarboxylation of C-12 to form cobalt-precorrin-7. This chain is Probable cobalt-precorrin-6B C(15)-methyltransferase (decarboxylating), found in Thermoplasma volcanium (strain ATCC 51530 / DSM 4299 / JCM 9571 / NBRC 15438 / GSS1).